The sequence spans 489 residues: Blue-light-activated histidine kinase (489 aa).

One can recognise a PAS domain in the interval 19 to 93 (ATDPFRAAVE…AIKSAIAAEK (75 aa)). An S-4a-FMN cysteine modification is found at Cys-69. 2 PAC domains span residues 93 to 147 (KPID…ELEK) and 232 to 281 (YSIE…NKAL). Residues 259-341 (NPLVLGIVQD…LLKENWAGAT (83 aa)) are HWE histidine kinase domain. At His-288 the chain carries Phosphohistidine; by autocatalysis.

FMN binds covalently to cysteine after exposure to blue light and this bond is spontaneously broken in the dark.

It catalyses the reaction ATP + protein L-histidine = ADP + protein N-phospho-L-histidine.. In terms of biological role, photosensitive kinase that is involved in increased bacterial virulence upon exposure to light. Once ejected from an infected animal host, sunlight acts as an environmental signal that increases the virulence of the bacterium, preparing it for infection of the next host. This photoreceptor protein is directly related to the bacterium's survival and replication within host macrophages. This chain is Blue-light-activated histidine kinase, found in Brucella ovis (strain ATCC 25840 / 63/290 / NCTC 10512).